The sequence spans 237 residues: MTEHVVPSDAARELFGETLPVAQRYAELLADVGVARGLIGPREVPRLWERHLMNCAVVEELIPKGADVIDLGSGAGLPGVVLAILRPDLSVTLLEPLLRRTVFLNECVELLRLDNVRVYRGRAEEVHAKLRADIVTARAVAPLPKLIGWALPLLRKGGSLLALKGERAEAELEEARHELARQRPNIADVIRVGGGKVDPATTVVRVTVTTALETGTKAAPSRSPRKPGGRKKRGRKR.

S-adenosyl-L-methionine is bound by residues glycine 72, leucine 77, 123–124, and arginine 138; that span reads AE. Residues 210 to 237 are disordered; that stretch reads TALETGTKAAPSRSPRKPGGRKKRGRKR. Positions 223–237 are enriched in basic residues; the sequence is SPRKPGGRKKRGRKR.

The protein belongs to the methyltransferase superfamily. RNA methyltransferase RsmG family.

It is found in the cytoplasm. Functionally, specifically methylates the N7 position of guanine in position 518 of 16S rRNA. The chain is Ribosomal RNA small subunit methyltransferase G from Thermobifida fusca (strain YX).